We begin with the raw amino-acid sequence, 425 residues long: RNA polymerase sigma factor SigA (425 aa).

A sigma-70 factor domain-2 region spans residues 193-263 (MVQSNLRLVV…TRAIADQSRT (71 aa)). Residues 217 to 220 (DLIQ) carry the Interaction with polymerase core subunit RpoC motif. Residues 272 to 347 (ETISRIKKTT…EADGETPEDE (76 aa)) are sigma-70 factor domain-3. Residues 360–413 (VLDTLSPRERDVLRLRYGLDDGRMKTLEEIGQIFNVTRERIRQIEAKALRKLRH) are sigma-70 factor domain-4. Positions 386 to 405 (LEEIGQIFNVTRERIRQIEA) form a DNA-binding region, H-T-H motif.

This sequence belongs to the sigma-70 factor family. RpoD/SigA subfamily. In terms of assembly, interacts transiently with the RNA polymerase catalytic core.

Its subcellular location is the cytoplasm. In terms of biological role, sigma factors are initiation factors that promote the attachment of RNA polymerase to specific initiation sites and are then released. This sigma factor is the primary sigma factor during exponential growth. This Synechocystis sp. (strain ATCC 27184 / PCC 6803 / Kazusa) protein is RNA polymerase sigma factor SigA.